The sequence spans 485 residues: uncharacterized protein (485 aa).

Transmembrane regions (helical) follow at residues 13–33 (WSAL…VILS), 38–58 (PFEF…DMLA), 79–99 (ALYW…IILS), 111–131 (LSFL…GQQY), 160–180 (VIIG…LLTV), 211–231 (LLFS…SSIT), 234–254 (IVAR…FNVA), 297–317 (INFP…YLVF), 321–341 (WLFI…RMVA), 365–385 (IIIF…VGAA), 388–408 (FLIC…KPVL), 420–440 (FIPF…DIYI), and 445–465 (LTFF…TIFI).

This sequence belongs to the polysaccharide synthase family.

Its subcellular location is the cell membrane. This is an uncharacterized protein from Klebsiella pneumoniae.